A 438-amino-acid chain; its full sequence is MDYQTIPSQGLSGEICVPGDKSISHRAVLLAAIAEGQTQVDGFLMGADNLAMVSALQQMGASIQVIEDENILVVEGVGMTGLQAPPEALDCGNSGTAIRLLSGLLAGQPFNTVLTGDSSLQRRPMKRIIDPLTLMGAKIDSTGNVPPLKIYGNPRLTGIHYQLPMASAQVKSCLLLAGLYARGKTCITEPAPSRDHTERLLKHFHYTLQKDKQSICVSGGGKLKANDISIPGDISSAAFFIVAATITPGSAIRLCRVGVNPTRLGVINLLKMMGADIEVTHYTEKNEEPTADITVRHARLKGIDIPPDQVPLTIDEFPVLLIAAAVAQGKTVLRDAAELRVKETDRIAAMVDGLQKLGIAAESLPDGVIIQGGTLEGGEVNSYDDHRIAMAFAVAGTLAKGPVRIRNCDNVKTSFPNFVELANEVGMNVKGVRGRGGF.

Residue K21 coordinates phosphoenolpyruvate. 3-phosphoshikimate is bound by residues S22 and R26. Residues 93–96 form a phosphoenolpyruvate region; that stretch reads NSGT. Residues G95, T96, and R123 each coordinate phosphoenolpyruvate. Positions 167, 168, 169, 315, and 342 each coordinate 3-phosphoshikimate. Phosphoenolpyruvate is bound at residue Q169. D315 functions as the Proton acceptor in the catalytic mechanism. The phosphoenolpyruvate site is built by R346 and R387.

This sequence belongs to the EPSP synthase family. In terms of assembly, homodimer or homotetramer.

The protein resides in the cytoplasm. It catalyses the reaction 3-phosphoshikimate + phosphoenolpyruvate = 5-O-(1-carboxyvinyl)-3-phosphoshikimate + phosphate. It participates in metabolic intermediate biosynthesis; chorismate biosynthesis; chorismate from D-erythrose 4-phosphate and phosphoenolpyruvate: step 6/7. Functionally, catalyzes the transfer of the enolpyruvyl moiety of phosphoenolpyruvate (PEP) to the 5-hydroxyl of shikimate-3-phosphate (S3P) to produce enolpyruvyl shikimate-3-phosphate and inorganic phosphate. This Coxiella burnetii (strain RSA 493 / Nine Mile phase I) protein is 3-phosphoshikimate 1-carboxyvinyltransferase.